We begin with the raw amino-acid sequence, 354 residues long: Methylthioribose-1-phosphate isomerase (354 aa).

D246 acts as the Proton donor in catalysis.

Belongs to the eIF-2B alpha/beta/delta subunits family. MtnA subfamily.

The protein localises to the cytoplasm. It localises to the nucleus. It catalyses the reaction 5-(methylsulfanyl)-alpha-D-ribose 1-phosphate = 5-(methylsulfanyl)-D-ribulose 1-phosphate. Its pathway is amino-acid biosynthesis; L-methionine biosynthesis via salvage pathway; L-methionine from S-methyl-5-thio-alpha-D-ribose 1-phosphate: step 1/6. In terms of biological role, catalyzes the interconversion of methylthioribose-1-phosphate (MTR-1-P) into methylthioribulose-1-phosphate (MTRu-1-P). The polypeptide is Methylthioribose-1-phosphate isomerase (mri1) (Xenopus tropicalis (Western clawed frog)).